Consider the following 230-residue polypeptide: Thymidylate kinase (230 aa).

20 to 27 (GGEGAGKS) lines the ATP pocket.

This sequence belongs to the thymidylate kinase family.

It carries out the reaction dTMP + ATP = dTDP + ADP. Phosphorylation of dTMP to form dTDP in both de novo and salvage pathways of dTTP synthesis. This Rhodopseudomonas palustris (strain TIE-1) protein is Thymidylate kinase.